The chain runs to 208 residues: Outer-membrane lipoprotein carrier protein (208 aa).

Residues 1–21 (MRLIRTLFVAALAMGASLAHA) form the signal peptide.

This sequence belongs to the LolA family. Monomer.

The protein resides in the periplasm. Participates in the translocation of lipoproteins from the inner membrane to the outer membrane. Only forms a complex with a lipoprotein if the residue after the N-terminal Cys is not an aspartate (The Asp acts as a targeting signal to indicate that the lipoprotein should stay in the inner membrane). The polypeptide is Outer-membrane lipoprotein carrier protein (Pseudomonas aeruginosa (strain UCBPP-PA14)).